Consider the following 545-residue polypeptide: CTP synthase (545 aa).

An amidoligase domain region spans residues 1–266 (MATNYIFVTG…DDFVCERFRL (266 aa)). Residue S14 coordinates CTP. S14 serves as a coordination point for UTP. ATP-binding positions include 15–20 (SLGKGI) and D72. Residues D72 and E140 each coordinate Mg(2+). CTP is bound by residues 147–149 (DIE), 187–192 (KTKPTQ), and K223. UTP contacts are provided by residues 187–192 (KTKPTQ) and K223. An ATP-binding site is contributed by 239 to 241 (KDV). Positions 291–542 (TIGMVGKYTE…VKAAYENHKK (252 aa)) constitute a Glutamine amidotransferase type-1 domain. An L-glutamine-binding site is contributed by G352. C379 (nucleophile; for glutamine hydrolysis) is an active-site residue. L-glutamine-binding positions include 380–383 (LGMQ), E403, and R470. Residues H515 and E517 contribute to the active site.

The protein belongs to the CTP synthase family. As to quaternary structure, homotetramer.

The enzyme catalyses UTP + L-glutamine + ATP + H2O = CTP + L-glutamate + ADP + phosphate + 2 H(+). It catalyses the reaction L-glutamine + H2O = L-glutamate + NH4(+). It carries out the reaction UTP + NH4(+) + ATP = CTP + ADP + phosphate + 2 H(+). It functions in the pathway pyrimidine metabolism; CTP biosynthesis via de novo pathway; CTP from UDP: step 2/2. Allosterically activated by GTP, when glutamine is the substrate; GTP has no effect on the reaction when ammonia is the substrate. The allosteric effector GTP functions by stabilizing the protein conformation that binds the tetrahedral intermediate(s) formed during glutamine hydrolysis. Inhibited by the product CTP, via allosteric rather than competitive inhibition. Catalyzes the ATP-dependent amination of UTP to CTP with either L-glutamine or ammonia as the source of nitrogen. Regulates intracellular CTP levels through interactions with the four ribonucleotide triphosphates. In Haemophilus influenzae (strain ATCC 51907 / DSM 11121 / KW20 / Rd), this protein is CTP synthase.